The following is a 141-amino-acid chain: Putative pre-16S rRNA nuclease (141 aa).

The protein belongs to the YqgF nuclease family.

The protein resides in the cytoplasm. Functionally, could be a nuclease involved in processing of the 5'-end of pre-16S rRNA. This chain is Putative pre-16S rRNA nuclease, found in Syntrophomonas wolfei subsp. wolfei (strain DSM 2245B / Goettingen).